The sequence spans 176 residues: Large ribosomal subunit protein uL6 (176 aa).

The protein belongs to the universal ribosomal protein uL6 family. As to quaternary structure, part of the 50S ribosomal subunit.

This protein binds to the 23S rRNA, and is important in its secondary structure. It is located near the subunit interface in the base of the L7/L12 stalk, and near the tRNA binding site of the peptidyltransferase center. This is Large ribosomal subunit protein uL6 from Burkholderia cenocepacia (strain HI2424).